The sequence spans 522 residues: Na(+)/H(+) antiporter NhaB (522 aa).

The next 9 membrane-spanning stretches (helical) occupy residues 13-33 (FLGN…IINP), 98-118 (LLLV…LFVF), 140-160 (AFLS…SVSV), 239-259 (FFIR…LVCL), 304-324 (AIIG…LVGL), 356-376 (LTVF…TPII), 390-410 (LFYL…VGTV), 446-466 (ATPN…APLI), and 477-497 (ALPY…FLLV).

It belongs to the NhaB Na(+)/H(+) (TC 2.A.34) antiporter family.

Its subcellular location is the cell inner membrane. The catalysed reaction is 2 Na(+)(in) + 3 H(+)(out) = 2 Na(+)(out) + 3 H(+)(in). Functionally, na(+)/H(+) antiporter that extrudes sodium in exchange for external protons. The sequence is that of Na(+)/H(+) antiporter NhaB from Yersinia pestis bv. Antiqua (strain Angola).